A 333-amino-acid chain; its full sequence is Cytosolic Fe-S cluster assembly factor NBP35 (333 aa).

The [4Fe-4S] cluster site is built by Cys-32, Cys-46, Cys-49, and Cys-55. Gly-85–Ser-92 serves as a coordination point for ATP. Cys-258 and Cys-261 together coordinate [4Fe-4S] cluster.

This sequence belongs to the Mrp/NBP35 ATP-binding proteins family. NUBP1/NBP35 subfamily. As to quaternary structure, heterotetramer of 2 NBP35 and 2 CFD1 chains. [4Fe-4S] cluster serves as cofactor.

The protein resides in the cytoplasm. It is found in the nucleus. Component of the cytosolic iron-sulfur (Fe/S) protein assembly (CIA) machinery. Required for maturation of extramitochondrial Fe-S proteins. The NBP35-CFD1 heterotetramer forms a Fe-S scaffold complex, mediating the de novo assembly of an Fe-S cluster and its transfer to target apoproteins. Required for biogenesis and export of both ribosomal subunits, which may reflect a role in assembly of the Fe/S clusters in RLI1, a protein which performs rRNA processing and ribosome export. In Eremothecium gossypii (strain ATCC 10895 / CBS 109.51 / FGSC 9923 / NRRL Y-1056) (Yeast), this protein is Cytosolic Fe-S cluster assembly factor NBP35.